The sequence spans 600 residues: NADH-quinone oxidoreductase subunit C/D (600 aa).

The segment at 1 to 190 (MVNNMTDLTA…SPFELTKAKQ (190 aa)) is NADH dehydrogenase I subunit C. Residues 214-600 (DFMFLNLGPN…IDFVMSDVDR (387 aa)) are NADH dehydrogenase I subunit D.

This sequence in the N-terminal section; belongs to the complex I 30 kDa subunit family. It in the C-terminal section; belongs to the complex I 49 kDa subunit family. NDH-1 is composed of 13 different subunits. Subunits NuoB, CD, E, F, and G constitute the peripheral sector of the complex.

It is found in the cell inner membrane. The catalysed reaction is a quinone + NADH + 5 H(+)(in) = a quinol + NAD(+) + 4 H(+)(out). NDH-1 shuttles electrons from NADH, via FMN and iron-sulfur (Fe-S) centers, to quinones in the respiratory chain. The immediate electron acceptor for the enzyme in this species is believed to be ubiquinone. Couples the redox reaction to proton translocation (for every two electrons transferred, four hydrogen ions are translocated across the cytoplasmic membrane), and thus conserves the redox energy in a proton gradient. The polypeptide is NADH-quinone oxidoreductase subunit C/D (Escherichia coli O127:H6 (strain E2348/69 / EPEC)).